The primary structure comprises 43 residues: Ferritin light chain (43 aa).

The region spanning 1 to 43 (MEAALLVEKNLNQALLDLHGLASARGDPHICDFLENHFLDEEV) is the Ferritin-like diiron domain.

Belongs to the ferritin family. Oligomer of 24 subunits. There are two types of subunits: L (light) chain and H (heavy) chain. The major chain can be light or heavy, depending on the species and tissue type. The functional molecule forms a roughly spherical shell with a diameter of 12 nm and contains a central cavity into which the insoluble mineral iron core is deposited. Interacts with NCOA4.

Its subcellular location is the cytoplasmic vesicle. It is found in the autophagosome. The protein localises to the cytoplasm. It localises to the autolysosome. In terms of biological role, stores iron in a soluble, non-toxic, readily available form. Important for iron homeostasis. Iron is taken up in the ferrous form and deposited as ferric hydroxides after oxidation. Also plays a role in delivery of iron to cells. Mediates iron uptake in capsule cells of the developing kidney. Delivery to lysosomes by the cargo receptor NCOA4 for autophagic degradation and release or iron. This chain is Ferritin light chain (FTL), found in Ovis aries (Sheep).